The primary structure comprises 249 residues: ATP synthase subunit a (249 aa).

A run of 5 helical transmembrane segments spans residues 35 to 55 (ILLT…ISSL), 92 to 112 (VPFI…GALV), 131 to 151 (INTT…AGIS), 187 to 209 (LFGN…PLFI), and 221 to 241 (SAIQ…EALE).

The protein belongs to the ATPase A chain family. As to quaternary structure, F-type ATPases have 2 components, CF(1) - the catalytic core - and CF(0) - the membrane proton channel. CF(1) has five subunits: alpha(3), beta(3), gamma(1), delta(1), epsilon(1). CF(0) has four main subunits: a, b, b' and c.

The protein localises to the cellular thylakoid membrane. Functionally, key component of the proton channel; it plays a direct role in the translocation of protons across the membrane. The polypeptide is ATP synthase subunit a (Trichodesmium erythraeum (strain IMS101)).